A 73-amino-acid polypeptide reads, in one-letter code: MKLCVAFLLVLVILPSVIGGKPSERTLSGATRRGDRRMCLSLGQRCERHSNCCGYLCCFYDKCVVTAIGCGHY.

A signal peptide spans 1 to 20 (MKLCVAFLLVLVILPSVIGG). A propeptide spanning residues 21-35 (KPSERTLSGATRRGD) is cleaved from the precursor. 4 cysteine pairs are disulfide-bonded: cysteine 39–cysteine 53, cysteine 46–cysteine 58, cysteine 52–cysteine 63, and cysteine 57–cysteine 70.

It belongs to the conotoxin I1 superfamily. As to expression, expressed by the venom duct.

The protein resides in the secreted. In Conus betulinus (Beech cone), this protein is Conotoxin Bt11.1.